Reading from the N-terminus, the 76-residue chain is Small ribosomal subunit protein bS18 (76 aa).

Belongs to the bacterial ribosomal protein bS18 family. In terms of assembly, part of the 30S ribosomal subunit. Forms a tight heterodimer with protein bS6.

Its function is as follows. Binds as a heterodimer with protein bS6 to the central domain of the 16S rRNA, where it helps stabilize the platform of the 30S subunit. This chain is Small ribosomal subunit protein bS18, found in Ectopseudomonas mendocina (strain ymp) (Pseudomonas mendocina).